Reading from the N-terminus, the 784-residue chain is Toll-like receptor 2 (784 aa).

The signal sequence occupies residues 1–20; the sequence is MPRALWTAWVWAVIILSTEG. Residues 21-587 lie on the Extracellular side of the membrane; sequence ASDQASSLSC…ARLSLSECHR (567 aa). Cysteine 30 and cysteine 36 are joined by a disulfide. 19 LRR repeats span residues 54-77, 78-101, 102-125, 126-150, 151-175, 176-199, 200-223, 224-250, 251-278, 279-308, 309-337, 338-361, 362-388, 389-414, 415-437, 438-457, 458-478, 479-500, and 501-524; these read VKSL…RCVN, LKTL…HLRN, LEYL…SLYV, LKFL…HLPN, LRTL…GLTF, LEEL…SIQN, ISHL…IVSS, LDCF…MSTS, VKKL…YVSG, ILEV…HLGN, VETL…LTGR, VKRV…HLKS, LEYL…AWPF, LQTL…TLEN, LNNL…WPGK, MKQL…CLPQ, TLEI…ILPQ, LKEL…FLPV, and LSVM…SFQQ. Asparagine 114 carries an N-linked (GlcNAc...) asparagine glycan. Asparagine 199 carries N-linked (GlcNAc...) asparagine glycosylation. A disulfide bridge links cysteine 353 with cysteine 382. Cysteine 432 and cysteine 454 are joined by a disulfide. N-linked (GlcNAc...) asparagine glycosylation is present at asparagine 442. Residues 525–579 form the LRRCT domain; the sequence is LKTLEAGGNNFICSCDFLSFTQGQQALGRVLVDWPDDYRCDSPSHVRGQRVQDAR. Residues 588–608 form a helical membrane-spanning segment; it reads AAVVSAACCALFLLLLLTGVL. Over 609 to 784 the chain is Cytoplasmic; sequence CHRFHGLWYM…WLNLRAAIRS (176 aa). In terms of domain architecture, TIR spans 639 to 782; it reads ICYDAFVSYS…GFWLNLRAAI (144 aa). Residue lysine 754 forms a Glycyl lysine isopeptide (Lys-Gly) (interchain with G-Cter in ubiquitin) linkage. An ATG16L1-binding motif motif is present at residues 761-778; sequence YLEWPVDETQQEGFWLNL.

Belongs to the Toll-like receptor family. As to quaternary structure, interacts with LY96, TLR1 and TLR6 (via extracellular domain). TLR2 seems to exist in heterodimers with either TLR1 or TLR6 before stimulation by the ligand. The heterodimers form bigger oligomers in response to their corresponding ligands as well as further heterotypic associations with other receptors such as CD14 and/or CD36. Binds MYD88 (via TIR domain). Interacts with TICAM1. Interacts with CNPY3. Interacts with ATG16L1. Interacts with PPP1R11. Interacts with TICAM2. Interacts with TIRAP. Ubiquitinated at Lys-754 by PPP1R11, leading to its degradation. Deubiquitinated by USP2. Post-translationally, glycosylation of Asn-442 is critical for secretion of the N-terminal ectodomain of TLR2.

It localises to the membrane. Its subcellular location is the cytoplasmic vesicle. The protein localises to the phagosome membrane. The protein resides in the membrane raft. In terms of biological role, cooperates with LY96 to mediate the innate immune response to bacterial lipoproteins and other microbial cell wall components. Cooperates with TLR1 or TLR6 to mediate the innate immune response to bacterial lipoproteins or lipopeptides. Acts via MYD88 and TRAF6, leading to NF-kappa-B activation, cytokine secretion and the inflammatory response. May also promote apoptosis in response to lipoproteins. Forms activation clusters composed of several receptors depending on the ligand, these clusters trigger signaling from the cell surface and subsequently are targeted to the Golgi in a lipid-raft dependent pathway. Forms the cluster TLR2:TLR6:CD14:CD36 in response to diacylated lipopeptides and TLR2:TLR1:CD14 in response to triacylated lipopeptides. The sequence is that of Toll-like receptor 2 (TLR2) from Bos taurus (Bovine).